The chain runs to 392 residues: Elongation factor Tu (392 aa).

In terms of domain architecture, tr-type G spans 10–202 (KVHVNVGTIG…VLDEYIEDPI (193 aa)). The tract at residues 19-26 (GHVDHGKT) is G1. Residue 19 to 26 (GHVDHGKT) coordinates GTP. Mg(2+) is bound at residue Thr26. The segment at 60–64 (GITIN) is G2. Residues 81–84 (DCPG) form a G3 region. Residues 81-85 (DCPGH) and 136-139 (NKCD) each bind GTP. The tract at residues 136–139 (NKCD) is G4. The tract at residues 174 to 176 (SAL) is G5.

It belongs to the TRAFAC class translation factor GTPase superfamily. Classic translation factor GTPase family. EF-Tu/EF-1A subfamily. As to quaternary structure, monomer.

The protein localises to the cytoplasm. It catalyses the reaction GTP + H2O = GDP + phosphate + H(+). In terms of biological role, GTP hydrolase that promotes the GTP-dependent binding of aminoacyl-tRNA to the A-site of ribosomes during protein biosynthesis. This chain is Elongation factor Tu, found in Apple proliferation phytoplasma.